The following is a 565-amino-acid chain: Histone acetyltransferase ESA1 (565 aa).

A disordered region spans residues 1–33; it reads MAPRTQKSTSGTPGGSGTPGPDEGPQISPGGTY. Positions 38 to 117 constitute a Tudor-knot domain; it reads VVVGCKAFVQ…DEWVSGTRLI (80 aa). Residues 173–217 are disordered; it reads AQAAKNVQGESGLETPQKRKADSGDTSTAQSIRADSIDADADGED. The MYST-type HAT domain maps to 284–553; sequence ARVKNLNKIQ…INPQKLHWTA (270 aa). The C2HC MYST-type zinc finger occupies 317–342; the sequence is LYICEMCLSYFPSPFTLKRHRSKCTL. The ESA1-RPD3 motif motif lies at 367–388; the sequence is RTWCRNLCLLSKCFLDHKTLYY. Lysine 384 carries the N6-acetyllysine; by autocatalysis modification. Residues 425–429 and 434–440 contribute to the acetyl-CoA site; these read ACILT and QRAGYGK. The active-site Proton donor/acceptor is the glutamate 460. Position 464 (serine 464) interacts with acetyl-CoA.

This sequence belongs to the MYST (SAS/MOZ) family. Component of the NuA4 histone acetyltransferase complex. Autoacetylation at Lys-384 is required for proper function.

Its subcellular location is the nucleus. It localises to the chromosome. It carries out the reaction L-lysyl-[histone] + acetyl-CoA = N(6)-acetyl-L-lysyl-[histone] + CoA + H(+). It catalyses the reaction L-lysyl-[protein] + acetyl-CoA = N(6)-acetyl-L-lysyl-[protein] + CoA + H(+). The catalysed reaction is 2-hydroxyisobutanoyl-CoA + L-lysyl-[protein] = N(6)-(2-hydroxyisobutanoyl)-L-lysyl-[protein] + CoA + H(+). The enzyme catalyses (2E)-butenoyl-CoA + L-lysyl-[protein] = N(6)-(2E)-butenoyl-L-lysyl-[protein] + CoA + H(+). Catalytic component of the NuA4 histone acetyltransferase (HAT) complex which is involved in epigenetic transcriptional activation of selected genes principally by acetylation of nucleosomal histones H4, H3, H2B, H2A and H2A variant H2A.Z. Acetylates histone H4 to form H4K5ac, H4K8ac, H4K12ac and H4K16ac, histone H3 to form H3K14ac, and histone H2A to form H2AK4ac and H2AK7ac. The NuA4 complex is involved in the DNA damage response and is required for chromosome segregation. The NuA4 complex plays a direct role in repair of DNA double-strand breaks (DSBs) through homologous recombination. Recruitment to promoters depends on H3K4me. Also acetylates non-histone proteins. In addition to protein acetyltransferase, can use different acyl-CoA substrates, such as 2-hydroxyisobutanoyl-CoA (2-hydroxyisobutyryl-CoA) or (2E)-butenoyl-CoA (crotonyl-CoA), and is able to mediate protein 2-hydroxyisobutyrylation and crotonylation, respectively. The sequence is that of Histone acetyltransferase ESA1 (ESA1) from Mycosarcoma maydis (Corn smut fungus).